The following is a 161-amino-acid chain: Endoribonuclease YbeY (161 aa).

Positions 127, 131, and 137 each coordinate Zn(2+).

It belongs to the endoribonuclease YbeY family. It depends on Zn(2+) as a cofactor.

It localises to the cytoplasm. Functionally, single strand-specific metallo-endoribonuclease involved in late-stage 70S ribosome quality control and in maturation of the 3' terminus of the 16S rRNA. This Listeria monocytogenes serotype 4a (strain HCC23) protein is Endoribonuclease YbeY.